The following is a 239-amino-acid chain: Ribosomal RNA small subunit methyltransferase G (239 aa).

S-adenosyl-L-methionine contacts are provided by residues Gly-79, Phe-84, 130–131 (AE), and Arg-149.

It belongs to the methyltransferase superfamily. RNA methyltransferase RsmG family.

The protein localises to the cytoplasm. Specifically methylates the N7 position of a guanine in 16S rRNA. The sequence is that of Ribosomal RNA small subunit methyltransferase G from Pelotomaculum thermopropionicum (strain DSM 13744 / JCM 10971 / SI).